A 212-amino-acid polypeptide reads, in one-letter code: ATP phosphoribosyltransferase (212 aa).

Belongs to the ATP phosphoribosyltransferase family. Short subfamily. Heteromultimer composed of HisG and HisZ subunits.

Its subcellular location is the cytoplasm. It catalyses the reaction 1-(5-phospho-beta-D-ribosyl)-ATP + diphosphate = 5-phospho-alpha-D-ribose 1-diphosphate + ATP. It functions in the pathway amino-acid biosynthesis; L-histidine biosynthesis; L-histidine from 5-phospho-alpha-D-ribose 1-diphosphate: step 1/9. Its function is as follows. Catalyzes the condensation of ATP and 5-phosphoribose 1-diphosphate to form N'-(5'-phosphoribosyl)-ATP (PR-ATP). Has a crucial role in the pathway because the rate of histidine biosynthesis seems to be controlled primarily by regulation of HisG enzymatic activity. The polypeptide is ATP phosphoribosyltransferase (hisG) (Halalkalibacterium halodurans (strain ATCC BAA-125 / DSM 18197 / FERM 7344 / JCM 9153 / C-125) (Bacillus halodurans)).